The sequence spans 551 residues: HTH-type transcriptional regulator SgrR (551 aa).

The HTH marR-type domain maps to 1–116; it reads MPSARLQQQF…LVSHLGRSFR (116 aa). The H-T-H motif DNA-binding region spans 26–49; sequence LNELAALLSCSRRHMRTLLNTMQD. Residues 163 to 492 form a solute-binding region; it reads ELEADIAHHW…IDWQADAARW (330 aa).

In terms of biological role, activates the small RNA gene sgrS under glucose-phosphate stress conditions as well as yfdZ. Represses its own transcription under both stress and non-stress conditions. Might act as a sensor of the intracellular accumulation of phosphoglucose by binding these molecules in its C-terminal solute-binding domain. The chain is HTH-type transcriptional regulator SgrR from Shigella sonnei (strain Ss046).